A 146-amino-acid chain; its full sequence is Universal stress protein A homolog 2 (146 aa).

The protein belongs to the universal stress protein A family. Homodimer.

Its subcellular location is the cytoplasm. Involved in stress response. This chain is Universal stress protein A homolog 2 (uspA2), found in Coxiella burnetii (strain RSA 493 / Nine Mile phase I).